The primary structure comprises 501 residues: L-arabinose isomerase (501 aa).

Mn(2+) is bound by residues glutamate 306, glutamate 333, histidine 350, and histidine 450.

The protein belongs to the arabinose isomerase family. As to quaternary structure, homohexamer. It depends on Mn(2+) as a cofactor.

The catalysed reaction is beta-L-arabinopyranose = L-ribulose. The protein operates within carbohydrate degradation; L-arabinose degradation via L-ribulose; D-xylulose 5-phosphate from L-arabinose (bacterial route): step 1/3. Its function is as follows. Catalyzes the conversion of L-arabinose to L-ribulose. The protein is L-arabinose isomerase of Pectobacterium carotovorum subsp. carotovorum (strain PC1).